A 328-amino-acid chain; its full sequence is Malate dehydrogenase (328 aa).

Gly-12 to Ala-18 lines the NAD(+) pocket. Substrate contacts are provided by Arg-93 and Arg-99. NAD(+) is bound by residues Asn-106, Gln-113, and Val-130–Asn-132. Asn-132 and Arg-163 together coordinate substrate. The active-site Proton acceptor is His-188.

It belongs to the LDH/MDH superfamily. MDH type 2 family.

It carries out the reaction (S)-malate + NAD(+) = oxaloacetate + NADH + H(+). Its function is as follows. Catalyzes the reversible oxidation of malate to oxaloacetate. This Burkholderia cenocepacia (strain ATCC BAA-245 / DSM 16553 / LMG 16656 / NCTC 13227 / J2315 / CF5610) (Burkholderia cepacia (strain J2315)) protein is Malate dehydrogenase.